The primary structure comprises 166 residues: Probable glucosamine 6-phosphate N-acetyltransferase 2 (166 aa).

The N-acetyltransferase domain maps to Val-21 to Phe-166. Residues Ser-43, Lys-93–Arg-96, and Glu-105–Val-107 each bind substrate. Residue Gly-115–Leu-120 coordinates acetyl-CoA. Tyr-136–Lys-137 serves as a coordination point for substrate. Residue Tyr-150–Lys-152 coordinates acetyl-CoA.

The protein belongs to the acetyltransferase family. GNA1 subfamily. Homodimer.

It is found in the endoplasmic reticulum membrane. The enzyme catalyses D-glucosamine 6-phosphate + acetyl-CoA = N-acetyl-D-glucosamine 6-phosphate + CoA + H(+). Its pathway is nucleotide-sugar biosynthesis; UDP-N-acetyl-alpha-D-glucosamine biosynthesis; N-acetyl-alpha-D-glucosamine 1-phosphate from alpha-D-glucosamine 6-phosphate (route I): step 1/2. Acetyltransferase involved in UDP-N-acetylglucosamine (UDP-GlcNAc) biosynthesis. UDP-GlcNAc is an essential metabolite that serves as an initial sugar donor of N-glycan synthesis and thus plays an important role in protein and lipid glycosylation. This Oryza sativa subsp. japonica (Rice) protein is Probable glucosamine 6-phosphate N-acetyltransferase 2.